A 239-amino-acid chain; its full sequence is UDP-2,3-diacylglucosamine hydrolase (239 aa).

Mn(2+) contacts are provided by aspartate 8, histidine 10, aspartate 41, asparagine 78, and histidine 113. 78-79 (NR) lines the substrate pocket. Aspartate 121, serine 159, asparagine 163, lysine 166, and histidine 194 together coordinate substrate. Mn(2+) contacts are provided by histidine 194 and histidine 196.

Belongs to the LpxH family. Requires Mn(2+) as cofactor.

Its subcellular location is the cell inner membrane. It catalyses the reaction UDP-2-N,3-O-bis[(3R)-3-hydroxytetradecanoyl]-alpha-D-glucosamine + H2O = 2-N,3-O-bis[(3R)-3-hydroxytetradecanoyl]-alpha-D-glucosaminyl 1-phosphate + UMP + 2 H(+). The protein operates within glycolipid biosynthesis; lipid IV(A) biosynthesis; lipid IV(A) from (3R)-3-hydroxytetradecanoyl-[acyl-carrier-protein] and UDP-N-acetyl-alpha-D-glucosamine: step 4/6. Functionally, hydrolyzes the pyrophosphate bond of UDP-2,3-diacylglucosamine to yield 2,3-diacylglucosamine 1-phosphate (lipid X) and UMP by catalyzing the attack of water at the alpha-P atom. Involved in the biosynthesis of lipid A, a phosphorylated glycolipid that anchors the lipopolysaccharide to the outer membrane of the cell. The chain is UDP-2,3-diacylglucosamine hydrolase from Shewanella sp. (strain MR-4).